A 98-amino-acid polypeptide reads, in one-letter code: Cell division topological specificity factor (98 aa).

Belongs to the MinE family.

Its function is as follows. Prevents the cell division inhibition by proteins MinC and MinD at internal division sites while permitting inhibition at polar sites. This ensures cell division at the proper site by restricting the formation of a division septum at the midpoint of the long axis of the cell. This chain is Cell division topological specificity factor, found in Methylorubrum populi (strain ATCC BAA-705 / NCIMB 13946 / BJ001) (Methylobacterium populi).